The sequence spans 138 residues: uncharacterized protein (138 aa).

A helical membrane pass occupies residues 19–40 (ECKVSVISFFLLAFLLMAHIWL). 3 repeat units span residues 94 to 106 (KGEIEGKEEKKEG), 107 to 119 (KGEIEGKEEKKEG), and 120 to 132 (KGEIEGKEEKKEV). The tract at residues 94–132 (KGEIEGKEEKKEGKGEIEGKEEKKEGKGEIEGKEEKKEV) is 3 X 13 AA tandem repeats of K-G-E-I-E-G-K-E-E-K-K-E-[GV]. Residues 98–138 (EGKEEKKEGKGEIEGKEEKKEGKGEIEGKEEKKEVENGPRK) are disordered.

In terms of tissue distribution, expressed in roots, leaves and flowers.

The protein localises to the mitochondrion membrane. Involved in cytoplasmic male sterility (CMS) by leading to pollen abortion. Not expressed in fertile (normal) plants. This is an uncharacterized protein from Raphanus sativus (Radish).